Reading from the N-terminus, the 231-residue chain is Biosynthetic peptidoglycan transglycosylase (231 aa).

Residues 10–30 (LLLLGLIGLFLVWQLWLLGWV) form a helical membrane-spanning segment.

Belongs to the glycosyltransferase 51 family.

Its subcellular location is the cell inner membrane. The enzyme catalyses [GlcNAc-(1-&gt;4)-Mur2Ac(oyl-L-Ala-gamma-D-Glu-L-Lys-D-Ala-D-Ala)](n)-di-trans,octa-cis-undecaprenyl diphosphate + beta-D-GlcNAc-(1-&gt;4)-Mur2Ac(oyl-L-Ala-gamma-D-Glu-L-Lys-D-Ala-D-Ala)-di-trans,octa-cis-undecaprenyl diphosphate = [GlcNAc-(1-&gt;4)-Mur2Ac(oyl-L-Ala-gamma-D-Glu-L-Lys-D-Ala-D-Ala)](n+1)-di-trans,octa-cis-undecaprenyl diphosphate + di-trans,octa-cis-undecaprenyl diphosphate + H(+). It functions in the pathway cell wall biogenesis; peptidoglycan biosynthesis. Functionally, peptidoglycan polymerase that catalyzes glycan chain elongation from lipid-linked precursors. The protein is Biosynthetic peptidoglycan transglycosylase of Dechloromonas aromatica (strain RCB).